Here is a 278-residue protein sequence, read N- to C-terminus: HTH-type transcriptional activator RhaS (278 aa).

The HTH araC/xylS-type domain occupies 174–272; that stretch reads NQLMAWLEDH…SWSPREIRQG (99 aa). 2 consecutive DNA-binding regions (H-T-H motif) follow at residues 191 to 212 and 239 to 262; these read ETVA…KQHT and VTDI…RREF.

In terms of assembly, binds DNA as a dimer.

The protein resides in the cytoplasm. Its function is as follows. Activates expression of the rhaBAD and rhaT operons. The sequence is that of HTH-type transcriptional activator RhaS from Enterobacter sp. (strain 638).